Here is a 405-residue protein sequence, read N- to C-terminus: Elongation factor Tu (405 aa).

The 204-residue stretch at 10–213 (KEHVNVGTIG…AMDEYIPTPE (204 aa)) folds into the tr-type G domain. The segment at 19-26 (GHVDHGKS) is G1. 19–26 (GHVDHGKS) lines the GTP pocket. Position 26 (S26) interacts with Mg(2+). Positions 64 to 68 (GITIN) are G2. Residues 85–88 (DCPG) are G3. GTP contacts are provided by residues 85–89 (DCPGH) and 140–143 (NKCD). Positions 140 to 143 (NKCD) are G4. Positions 178-180 (SAL) are G5.

The protein belongs to the TRAFAC class translation factor GTPase superfamily. Classic translation factor GTPase family. EF-Tu/EF-1A subfamily. In terms of assembly, monomer.

It localises to the cytoplasm. It carries out the reaction GTP + H2O = GDP + phosphate + H(+). GTP hydrolase that promotes the GTP-dependent binding of aminoacyl-tRNA to the A-site of ribosomes during protein biosynthesis. The polypeptide is Elongation factor Tu (Aquifex pyrophilus).